A 128-amino-acid polypeptide reads, in one-letter code: Claw keratin (128 aa).

2 tandem repeats follow at residues 83-91 (GGYGGLGGY) and 92-100 (GGYGGLGGY). Positions 83-104 (GGYGGLGGYGGYGGLGGYGGYG) are 3 X 9 AA tandem repeats, Gly-rich. One copy of the 3; approximate repeat lies at 101–109 (GGYGGFGSC).

Belongs to the avian keratin family. Abundantly expressed in the claw and at a low level in feather tissue.

In Gallus gallus (Chicken), this protein is Claw keratin (CKER1).